The following is a 141-amino-acid chain: Nucleoside diphosphate kinase (141 aa).

Lys-11, Phe-59, Arg-87, Thr-93, Arg-104, and Asn-114 together coordinate ATP. His-117 acts as the Pros-phosphohistidine intermediate in catalysis.

The protein belongs to the NDK family. Homotetramer. The cofactor is Mg(2+).

The protein localises to the cytoplasm. The enzyme catalyses a 2'-deoxyribonucleoside 5'-diphosphate + ATP = a 2'-deoxyribonucleoside 5'-triphosphate + ADP. It carries out the reaction a ribonucleoside 5'-diphosphate + ATP = a ribonucleoside 5'-triphosphate + ADP. Major role in the synthesis of nucleoside triphosphates other than ATP. The ATP gamma phosphate is transferred to the NDP beta phosphate via a ping-pong mechanism, using a phosphorylated active-site intermediate. This chain is Nucleoside diphosphate kinase, found in Burkholderia multivorans (strain ATCC 17616 / 249).